The sequence spans 402 residues: Ubiquitin-like modifier-activating enzyme 5 (402 aa).

ATP-binding residues include Gly-81, Asp-102, Lys-125, Asn-148, and Asn-182. Cys-224 and Cys-227 together coordinate Zn(2+). Residue Cys-248 is the Glycyl thioester intermediate of the active site. Residues Cys-301 and Cys-306 each coordinate Zn(2+). Residues 369-402 (EAPEKSSETSEETVTTAPPDDASLEDLMAQMKSM) form a disordered region.

It belongs to the ubiquitin-activating E1 family. UBA5 subfamily.

Its function is as follows. E1-like enzyme which activates UFM1. The protein is Ubiquitin-like modifier-activating enzyme 5 of Drosophila erecta (Fruit fly).